A 270-amino-acid chain; its full sequence is Formamidopyrimidine-DNA glycosylase (270 aa).

Pro-2 (schiff-base intermediate with DNA) is an active-site residue. Glu-3 functions as the Proton donor in the catalytic mechanism. Catalysis depends on Lys-58, which acts as the Proton donor; for beta-elimination activity. The DNA site is built by His-91, Arg-110, and Arg-151. Residues 236–270 form an FPG-type zinc finger; sequence FVYGRGGEFCKVCGSTLREIRLGQRASVYCPRCQR. Catalysis depends on Arg-260, which acts as the Proton donor; for delta-elimination activity.

Belongs to the FPG family. In terms of assembly, monomer. Requires Zn(2+) as cofactor.

It catalyses the reaction Hydrolysis of DNA containing ring-opened 7-methylguanine residues, releasing 2,6-diamino-4-hydroxy-5-(N-methyl)formamidopyrimidine.. It carries out the reaction 2'-deoxyribonucleotide-(2'-deoxyribose 5'-phosphate)-2'-deoxyribonucleotide-DNA = a 3'-end 2'-deoxyribonucleotide-(2,3-dehydro-2,3-deoxyribose 5'-phosphate)-DNA + a 5'-end 5'-phospho-2'-deoxyribonucleoside-DNA + H(+). Functionally, involved in base excision repair of DNA damaged by oxidation or by mutagenic agents. Acts as a DNA glycosylase that recognizes and removes damaged bases. Has a preference for oxidized purines, such as 7,8-dihydro-8-oxoguanine (8-oxoG). Has AP (apurinic/apyrimidinic) lyase activity and introduces nicks in the DNA strand. Cleaves the DNA backbone by beta-delta elimination to generate a single-strand break at the site of the removed base with both 3'- and 5'-phosphates. This chain is Formamidopyrimidine-DNA glycosylase, found in Pseudomonas paraeruginosa (strain DSM 24068 / PA7) (Pseudomonas aeruginosa (strain PA7)).